The chain runs to 220 residues: MAYRDQPLGELALSIPRASALFRKYDMDYCCGGKQTLARAAARKELDVDVIEAELAKLAEQPIEKDWRSAPLAEIIDHIIVRYHDRHREQLPELILQATKVERVHADKPSVPKGLTKYLTMLHEELSSHMMKEEQILFPMIKQGMGSQAMGPISVMESEHDEAGELLEVIKHTTNNVTPPPEACTTWKAMYNGINELIDDLMEHISLENNVLFPRALAGE.

It belongs to the RIC family. YtfE subfamily. As to quaternary structure, homodimer.

Its subcellular location is the cytoplasm. Functionally, di-iron-containing protein involved in the repair of iron-sulfur clusters damaged by oxidative and nitrosative stress conditions. The sequence is that of Iron-sulfur cluster repair protein YtfE from Escherichia coli (strain SMS-3-5 / SECEC).